The following is a 139-amino-acid chain: uncharacterized protein (139 aa).

Residues 3–110 (IFCNIVEGRD…VPTWSQDPDI (108 aa)) form the HIT domain. The short motif at 95–99 (HSHFH) is the Histidine triad motif element.

This is an uncharacterized protein from Saccharolobus solfataricus (strain ATCC 35092 / DSM 1617 / JCM 11322 / P2) (Sulfolobus solfataricus).